Consider the following 387-residue polypeptide: DNA primase small subunit PriS (387 aa).

Active-site residues include Asp98, Asp100, and Asp289.

This sequence belongs to the eukaryotic-type primase small subunit family. In terms of assembly, heterodimer of a small subunit (PriS) and a large subunit (PriL). The cofactor is Mg(2+). Requires Mn(2+) as cofactor.

Catalytic subunit of DNA primase, an RNA polymerase that catalyzes the synthesis of short RNA molecules used as primers for DNA polymerase during DNA replication. The small subunit contains the primase catalytic core and has DNA synthesis activity on its own. Binding to the large subunit stabilizes and modulates the activity, increasing the rate of DNA synthesis while decreasing the length of the DNA fragments, and conferring RNA synthesis capability. The DNA polymerase activity may enable DNA primase to also catalyze primer extension after primer synthesis. May also play a role in DNA repair. In Halorubrum lacusprofundi (strain ATCC 49239 / DSM 5036 / JCM 8891 / ACAM 34), this protein is DNA primase small subunit PriS.